Reading from the N-terminus, the 101-residue chain is Small ribosomal subunit protein uS14 (101 aa).

The protein belongs to the universal ribosomal protein uS14 family. Part of the 30S ribosomal subunit. Contacts proteins S3 and S10.

In terms of biological role, binds 16S rRNA, required for the assembly of 30S particles and may also be responsible for determining the conformation of the 16S rRNA at the A site. In Escherichia coli O8 (strain IAI1), this protein is Small ribosomal subunit protein uS14.